The primary structure comprises 663 residues: Epithelial sodium channel subunit gamma-2 (663 aa).

Topologically, residues 1–55 are cytoplasmic; the sequence is MSNSGKKLTQKLKKNLPVTGPQAPTLYELMQWYCLNTNTHGCRRIVVSKGRLRRW. A helical transmembrane segment spans residues 56–76; the sequence is IWIVLTLIAVALIFWQCALLL. The Extracellular portion of the chain corresponds to 77–544; sequence MTYYSVSASI…GGQLGLWMSC (468 aa). 8 cysteine pairs are disulfide-bonded: Cys101–Cys286, Cys209–Cys217, Cys263–Cys270, Cys375–Cys460, Cys397–Cys456, Cys401–Cys452, Cys410–Cys437, and Cys412–Cys426. A helical transmembrane segment spans residues 545 to 565; the sequence is SMVCGLEIVEVFFIDSFWVIL. The Cytoplasmic portion of the chain corresponds to 566–663; sequence RQKWHKLCNW…IDSDEDVERF (98 aa).

The protein belongs to the amiloride-sensitive sodium channel (TC 1.A.6) family. SCNN1G subfamily. In terms of assembly, component of the heterotrimeric epithelial sodium channel (ENaC) composed of an alpha/SCNN1A, a beta/SCNN1B and a gamma/SCNN1G subunit.

Its subcellular location is the apical cell membrane. The enzyme catalyses Na(+)(in) = Na(+)(out). Originally identified and characterized by its inhibition by the diuretic drug amiloride. This is one of the three pore-forming subunits of the heterotrimeric epithelial sodium channel (ENaC), a critical regulator of sodium balance and fluid homeostasis. ENaC operates in epithelial tissues, where it mediates the electrodiffusion of sodium ions from extracellular fluid through the apical membrane of cells, with water following osmotically. The chain is Epithelial sodium channel subunit gamma-2 (scnn1g-b) from Xenopus laevis (African clawed frog).